We begin with the raw amino-acid sequence, 197 residues long: Cell division protein SepF (197 aa).

Disordered stretches follow at residues 38-72 and 164-197; these read MPTP…TTPT and LSRE…AQAQ. Residues 58–72 are compositionally biased toward polar residues; sequence TVASNFAMNSNTTPT. Residues 170–185 are compositionally biased toward low complexity; that stretch reads PATPAAPARPAAPAPA.

The protein belongs to the SepF family. As to quaternary structure, homodimer. Interacts with FtsZ.

The protein resides in the cytoplasm. Cell division protein that is part of the divisome complex and is recruited early to the Z-ring. Probably stimulates Z-ring formation, perhaps through the cross-linking of FtsZ protofilaments. Its function overlaps with FtsA. The chain is Cell division protein SepF from Picosynechococcus sp. (strain ATCC 27264 / PCC 7002 / PR-6) (Agmenellum quadruplicatum).